Reading from the N-terminus, the 161-residue chain is 2-C-methyl-D-erythritol 2,4-cyclodiphosphate synthase (161 aa).

Positions 10 and 12 each coordinate a divalent metal cation. 4-CDP-2-C-methyl-D-erythritol 2-phosphate-binding positions include 10–12 (DVH) and 36–37 (HS). H44 provides a ligand contact to a divalent metal cation. Residues 58–60 (DIG), 63–67 (FSDTD), and R144 contribute to the 4-CDP-2-C-methyl-D-erythritol 2-phosphate site.

The protein belongs to the IspF family. As to quaternary structure, homotrimer. The cofactor is a divalent metal cation.

It catalyses the reaction 4-CDP-2-C-methyl-D-erythritol 2-phosphate = 2-C-methyl-D-erythritol 2,4-cyclic diphosphate + CMP. It functions in the pathway isoprenoid biosynthesis; isopentenyl diphosphate biosynthesis via DXP pathway; isopentenyl diphosphate from 1-deoxy-D-xylulose 5-phosphate: step 4/6. Involved in the biosynthesis of isopentenyl diphosphate (IPP) and dimethylallyl diphosphate (DMAPP), two major building blocks of isoprenoid compounds. Catalyzes the conversion of 4-diphosphocytidyl-2-C-methyl-D-erythritol 2-phosphate (CDP-ME2P) to 2-C-methyl-D-erythritol 2,4-cyclodiphosphate (ME-CPP) with a corresponding release of cytidine 5-monophosphate (CMP). This chain is 2-C-methyl-D-erythritol 2,4-cyclodiphosphate synthase, found in Burkholderia cenocepacia (strain HI2424).